The primary structure comprises 315 residues: Methionyl-tRNA formyltransferase (315 aa).

113–116 (SLLP) lines the (6S)-5,6,7,8-tetrahydrofolate pocket.

This sequence belongs to the Fmt family.

It catalyses the reaction L-methionyl-tRNA(fMet) + (6R)-10-formyltetrahydrofolate = N-formyl-L-methionyl-tRNA(fMet) + (6S)-5,6,7,8-tetrahydrofolate + H(+). Functionally, attaches a formyl group to the free amino group of methionyl-tRNA(fMet). The formyl group appears to play a dual role in the initiator identity of N-formylmethionyl-tRNA by promoting its recognition by IF2 and preventing the misappropriation of this tRNA by the elongation apparatus. In Salmonella enteritidis PT4 (strain P125109), this protein is Methionyl-tRNA formyltransferase.